Reading from the N-terminus, the 380-residue chain is Beta sliding clamp (380 aa).

Belongs to the beta sliding clamp family. As to quaternary structure, forms a ring-shaped head-to-tail homodimer around DNA which binds and tethers DNA polymerases and other proteins to the DNA. The DNA replisome complex has a single clamp-loading complex (3 tau and 1 each of delta, delta', psi and chi subunits) which binds 3 Pol III cores (1 core on the leading strand and 2 on the lagging strand) each with a beta sliding clamp dimer. Additional proteins in the replisome are other copies of gamma, psi and chi, Ssb, DNA helicase and RNA primase.

The protein localises to the cytoplasm. Confers DNA tethering and processivity to DNA polymerases and other proteins. Acts as a clamp, forming a ring around DNA (a reaction catalyzed by the clamp-loading complex) which diffuses in an ATP-independent manner freely and bidirectionally along dsDNA. Initially characterized for its ability to contact the catalytic subunit of DNA polymerase III (Pol III), a complex, multichain enzyme responsible for most of the replicative synthesis in bacteria; Pol III exhibits 3'-5' exonuclease proofreading activity. The beta chain is required for initiation of replication as well as for processivity of DNA replication. The polypeptide is Beta sliding clamp (dnaN) (Mycoplasma pneumoniae (strain ATCC 29342 / M129 / Subtype 1) (Mycoplasmoides pneumoniae)).